The sequence spans 284 residues: Protein SIC1 (284 aa).

A disordered region spans residues 1-89 (MTPSTPPRSR…SPFPKSSVKR (89 aa)). Residue threonine 5 is modified to Phosphothreonine; by PHO85. Composition is skewed to polar residues over residues 18 to 52 (PSGNTSSSALMQGQKTPQKPSQNLVPVTPSTTKSF) and 61 to 79 (PNSNMGMTSPFNGLTSPQR). Threonine 33 is subject to Phosphothreonine. The residue at position 76 (serine 76) is a Phosphoserine. At threonine 173 the chain carries Phosphothreonine. Phosphoserine is present on residues serine 198 and serine 201. 3 positions are modified to lysine derivative: lysine 268, lysine 272, and lysine 274.

As to quaternary structure, interacts with HOG1. Post-translationally, phosphorylated by cyclin-dependent kinases CDC28 and PHO85 in association with G1-cyclins, promoting degradation of SIC1 and exit form G1. May contain a covalently attached chromophore. In terms of processing, the N-terminus is blocked.

It is found in the cytoplasm. Its subcellular location is the nucleus. In terms of biological role, substrate and inhibitor of the cyclin-dependent protein kinase CDC28. Its activity could be important for faithful segregation of chromosomes to daughter cells. It acts in response to a signal from a post-start checkpoint. The chain is Protein SIC1 (SIC1) from Saccharomyces cerevisiae (strain ATCC 204508 / S288c) (Baker's yeast).